A 62-amino-acid polypeptide reads, in one-letter code: Protein YnfQ (62 aa).

It belongs to the YmcF/YnqF peptide family.

The polypeptide is Protein YnfQ (Escherichia coli (strain K12)).